We begin with the raw amino-acid sequence, 631 residues long: MSTTTLTRREQRAKAQHFIDTLEGTAFPNSKRIYVTGSQHDIRVPMREIQLSPTLIGGSKDNQQFEENEAVPVYDTSGPYGDPEVAINVQQGLAKLRQPWIDARNDSEELDDRSSAYTRERLADDGLDDLRFTGLLTPKRAKAGKRITQLHYARQGIVTPEMEFIAIRENMGRERICSEVLRHQHPGMSFGARLPENITPEFVRDEVAAGRAIIPANINHPESEPMIIGRNFPVKVNANIGNSAVTSSIEEEVEKLVWSTRWGADTVMDLSTGRYIHETREWILRNSPVPIGTVPIYQALEKVNGIAEDLTWEAFRDTLLEQAEQGVDYFTIHAGVLLRYVPMTAKRLTGIVSRGGSIMAKWCLSHHKENFLFEHFREICEICAAYDVSLSLGDGLRPGSIQDANDEAQFSELHTLGELTKIAWEYDVQVMIEGPGHVPMHMIQRNMTEELESCHEAPFYTLGPLTTDIAPGYDHFTSGIGAAMIGWFGCAMLCYVTPKEHLGLPNKEDVKQGLITYKIAAHAADLAKGHPGAQIRDNAMSKARFEFRWEDQFNLALDPFTARAYHDETLPQESGKVAHFCSMCGPKFCSMKISQEVRDYAAAQAIEVGMADMSESFRAKGGEIYLKREEA.

Residues Asn-239, Met-268, Tyr-297, His-333, 353–355, 394–397, and Glu-433 contribute to the substrate site; these read SRG and DGLR. Residue His-437 participates in Zn(2+) binding. Tyr-460 is a substrate binding site. Residue His-501 participates in Zn(2+) binding. Residues Cys-581, Cys-584, and Cys-589 each coordinate [4Fe-4S] cluster.

The protein belongs to the ThiC family. Homodimer. Requires [4Fe-4S] cluster as cofactor.

It catalyses the reaction 5-amino-1-(5-phospho-beta-D-ribosyl)imidazole + S-adenosyl-L-methionine = 4-amino-2-methyl-5-(phosphooxymethyl)pyrimidine + CO + 5'-deoxyadenosine + formate + L-methionine + 3 H(+). Its pathway is cofactor biosynthesis; thiamine diphosphate biosynthesis. In terms of biological role, catalyzes the synthesis of the hydroxymethylpyrimidine phosphate (HMP-P) moiety of thiamine from aminoimidazole ribotide (AIR) in a radical S-adenosyl-L-methionine (SAM)-dependent reaction. The chain is Phosphomethylpyrimidine synthase from Salmonella gallinarum (strain 287/91 / NCTC 13346).